A 350-amino-acid chain; its full sequence is Phosphoribosylformylglycinamidine cyclo-ligase (350 aa).

It belongs to the AIR synthase family.

The protein resides in the cytoplasm. The enzyme catalyses 2-formamido-N(1)-(5-O-phospho-beta-D-ribosyl)acetamidine + ATP = 5-amino-1-(5-phospho-beta-D-ribosyl)imidazole + ADP + phosphate + H(+). It participates in purine metabolism; IMP biosynthesis via de novo pathway; 5-amino-1-(5-phospho-D-ribosyl)imidazole from N(2)-formyl-N(1)-(5-phospho-D-ribosyl)glycinamide: step 2/2. In Cupriavidus pinatubonensis (strain JMP 134 / LMG 1197) (Cupriavidus necator (strain JMP 134)), this protein is Phosphoribosylformylglycinamidine cyclo-ligase.